Reading from the N-terminus, the 216-residue chain is Probable methylthioribulose-1-phosphate dehydratase (216 aa).

A substrate-binding site is contributed by cysteine 87. Zn(2+) contacts are provided by histidine 105 and histidine 107. Glutamate 129 functions as the Proton donor/acceptor in the catalytic mechanism.

Belongs to the aldolase class II family. MtnB subfamily. Zn(2+) serves as cofactor.

The protein resides in the cytoplasm. It carries out the reaction 5-(methylsulfanyl)-D-ribulose 1-phosphate = 5-methylsulfanyl-2,3-dioxopentyl phosphate + H2O. It functions in the pathway amino-acid biosynthesis; L-methionine biosynthesis via salvage pathway; L-methionine from S-methyl-5-thio-alpha-D-ribose 1-phosphate: step 2/6. Functionally, catalyzes the dehydration of methylthioribulose-1-phosphate (MTRu-1-P) into 2,3-diketo-5-methylthiopentyl-1-phosphate (DK-MTP-1-P). This chain is Probable methylthioribulose-1-phosphate dehydratase, found in Drosophila persimilis (Fruit fly).